The primary structure comprises 359 residues: Peptide chain release factor 1 (359 aa).

Residue Gln-235 is modified to N5-methylglutamine.

It belongs to the prokaryotic/mitochondrial release factor family. In terms of processing, methylated by PrmC. Methylation increases the termination efficiency of RF1.

Its subcellular location is the cytoplasm. Peptide chain release factor 1 directs the termination of translation in response to the peptide chain termination codons UAG and UAA. The chain is Peptide chain release factor 1 from Polynucleobacter asymbioticus (strain DSM 18221 / CIP 109841 / QLW-P1DMWA-1) (Polynucleobacter necessarius subsp. asymbioticus).